The sequence spans 311 residues: MDGDNQSENSQFLLLGISESPEQQQILFWMFLSMYLVTVLGNVLIILAISSDSHLHTPMYFFLANLSFTDLFFVTNTIPKMLVNFQSQNKAISYAGCLTQLYFLVSLVTLDNLILAVMAYDRYVAICCPLHYVTAMSPGLCVLLLSLCWGLSVLYGLLLTFLLTRVTFCGPREIHYLFCDMYILLWLACSNTHIIHTALIATGCFIFLTLLGFMTTSYVRIVRTILQMPSASKKYKTFSTCASHLGVVSLFYGTLAMVYLQPLHTYSMKDSVATVMYAVLTPMMNPFIYSLRNKDMHGAPGRVLWRPFQRP.

At 1 to 25 (MDGDNQSENSQFLLLGISESPEQQQ) the chain is on the extracellular side. Residue N5 is glycosylated (N-linked (GlcNAc...) asparagine). Residues 26–49 (ILFWMFLSMYLVTVLGNVLIILAI) traverse the membrane as a helical segment. Over 50 to 57 (SSDSHLHT) the chain is Cytoplasmic. A helical transmembrane segment spans residues 58–79 (PMYFFLANLSFTDLFFVTNTIP). The Extracellular portion of the chain corresponds to 80 to 100 (KMLVNFQSQNKAISYAGCLTQ). C97 and C189 are disulfide-bonded. A helical transmembrane segment spans residues 101–120 (LYFLVSLVTLDNLILAVMAY). Topologically, residues 121–140 (DRYVAICCPLHYVTAMSPGL) are cytoplasmic. Residues 141–158 (CVLLLSLCWGLSVLYGLL) traverse the membrane as a helical segment. Residues 159–196 (LTFLLTRVTFCGPREIHYLFCDMYILLWLACSNTHIIH) are Extracellular-facing. The helical transmembrane segment at 197-220 (TALIATGCFIFLTLLGFMTTSYVR) threads the bilayer. The Cytoplasmic segment spans residues 221 to 237 (IVRTILQMPSASKKYKT). A helical membrane pass occupies residues 238-260 (FSTCASHLGVVSLFYGTLAMVYL). Topologically, residues 261-271 (QPLHTYSMKDS) are extracellular. A helical membrane pass occupies residues 272–291 (VATVMYAVLTPMMNPFIYSL). Over 292 to 311 (RNKDMHGAPGRVLWRPFQRP) the chain is Cytoplasmic.

The protein belongs to the G-protein coupled receptor 1 family.

It is found in the cell membrane. In terms of biological role, odorant receptor. The chain is Olfactory receptor 1D4 (OR1D4) from Homo sapiens (Human).